We begin with the raw amino-acid sequence, 348 residues long: Hereditary hemochromatosis protein homolog (348 aa).

Positions 1-22 are cleaved as a signal peptide; the sequence is MGPRARPALFFLILLRTVAAQG. The interval 23-114 is alpha-1; the sequence is RPPRSHSLRY…IMDNHNHSKE (92 aa). The Extracellular segment spans residues 23-306; it reads RPPRSHSLRY…WEPSLSNTLV (284 aa). N-linked (GlcNAc...) asparagine glycans are attached at residues Asn110, Asn130, and Asn234. Residues 115-205 form an alpha-2 region; the sequence is SHTLQVILGC…ELGRGVLDQQ (91 aa). Disulfide bonds link Cys124–Cys187 and Cys225–Cys282. The segment at 206–297 is alpha-3; the sequence is VPPLVKVTHH…GLDQPLTATW (92 aa). Positions 207 to 296 constitute an Ig-like C1-type domain; the sequence is PPLVKVTHHV…PGLDQPLTAT (90 aa). The segment at 298-306 is connecting peptide; the sequence is EPSLSNTLV. A helical membrane pass occupies residues 307–330; the sequence is TGVISGIAVCVIIFFIGILFRILR. The Cytoplasmic segment spans residues 331–348; the sequence is KRQASRGAMGDYVLGECE.

The protein belongs to the MHC class I family. In terms of assembly, binds TFR through the extracellular domain in a pH-dependent manner.

The protein localises to the cell membrane. Functionally, binds to transferrin receptor (TFR) and reduces its affinity for iron-loaded transferrin. This Ceratotherium simum (White rhinoceros) protein is Hereditary hemochromatosis protein homolog (HFE).